The following is a 156-amino-acid chain: Arginine repressor (156 aa).

The protein belongs to the ArgR family.

Its subcellular location is the cytoplasm. It participates in amino-acid biosynthesis; L-arginine biosynthesis [regulation]. Regulates arginine biosynthesis genes. The polypeptide is Arginine repressor (Shewanella loihica (strain ATCC BAA-1088 / PV-4)).